Consider the following 271-residue polypeptide: Probable ribosomal RNA small subunit methyltransferase A (271 aa).

Residues L12, G37, E58, D83, and N100 each contribute to the S-adenosyl-L-methionine site.

Belongs to the class I-like SAM-binding methyltransferase superfamily. rRNA adenine N(6)-methyltransferase family. RsmA subfamily.

It localises to the cytoplasm. Specifically dimethylates two adjacent adenosines in the loop of a conserved hairpin near the 3'-end of 16S rRNA in the 30S particle. May play a critical role in biogenesis of 30S subunits. In Methanococcus aeolicus (strain ATCC BAA-1280 / DSM 17508 / OCM 812 / Nankai-3), this protein is Probable ribosomal RNA small subunit methyltransferase A.